We begin with the raw amino-acid sequence, 766 residues long: Protein zer-1 homolog (766 aa).

N-acetylalanine is present on A2. 3 LRR repeats span residues S226–L245, H246–R268, and L278–E302. ARM repeat units follow at residues R427–I467, D511–D556, T558–E600, K602–F643, and P714–N756.

It belongs to the zyg-11 family. As to quaternary structure, interacts with the ELOC-ELOB/Elongin BC complex. Part of an E3 ubiquitin ligase complex including ZER1, CUL2 and Elongin BC. As to expression, expressed in testis, spermatocytes and spermatids (at protein level). Expressed in spermatocytes, spermatids, prostate, skeletal muscle, ovary, small intestine, heart, brain and pancreas.

Serves as substrate adapter subunit in the E3 ubiquitin ligase complex ZYG11B-CUL2-Elongin BC. Acts to target substrates bearing N-terminal degrons for proteasomal degradation with the first four residues of substrates being the key recognition elements. Involved in the clearance of proteolytic fragments generated by caspase cleavage during apoptosis since N-terminal glycine degrons are strongly enriched at caspase cleavage sites. Also important in the quality control of protein N-myristoylation in which N-terminal glycine degrons are conditionally exposed after a failure of N-myristoylation. The chain is Protein zer-1 homolog from Homo sapiens (Human).